A 207-amino-acid polypeptide reads, in one-letter code: MVASLVVLISGSGSNLQAIIDATLNGVLKGEAAVTHVLSNRKNAYGLERAAKAGIPTSLHTLLPYKKEYGPEIGRKKYDAELAEKIIKLQPSLVVCAGWMHILSPEVLIPLETNKIGIINLHPALPGAFNGIHAIERAFEAAQQGKITHTGAMVHWVIAAVDEGKPIIVQEVPILSTDSIEALEEKIHAAEHVILVQAIHQIITDNK.

13 to 15 (GSN) contacts N(1)-(5-phospho-beta-D-ribosyl)glycinamide. Residues 100–103 (MHIL) and Asn120 each bind (6R)-10-formyltetrahydrofolate. Catalysis depends on His122, which acts as the Proton donor. (6R)-10-formyltetrahydrofolate is bound at residue Asp162. N(1)-(5-phospho-beta-D-ribosyl)glycinamide is bound at residue Glu191.

The protein belongs to the GART family.

It catalyses the reaction N(1)-(5-phospho-beta-D-ribosyl)glycinamide + (6R)-10-formyltetrahydrofolate = N(2)-formyl-N(1)-(5-phospho-beta-D-ribosyl)glycinamide + (6S)-5,6,7,8-tetrahydrofolate + H(+). It functions in the pathway purine metabolism; IMP biosynthesis via de novo pathway; N(2)-formyl-N(1)-(5-phospho-D-ribosyl)glycinamide from N(1)-(5-phospho-D-ribosyl)glycinamide (10-formyl THF route): step 1/1. The chain is Phosphoribosylglycinamide formyltransferase (ade5) from Schizosaccharomyces pombe (strain 972 / ATCC 24843) (Fission yeast).